The chain runs to 527 residues: Peptide chain release factor 3 (527 aa).

A tr-type G domain is found at 9 to 277 (AKRRTFAIIS…AVVDWAPRPL (269 aa)). GTP contacts are provided by residues 18–25 (SHPDAGKT), 86–90 (DTPGH), and 140–143 (NKLD).

Belongs to the TRAFAC class translation factor GTPase superfamily. Classic translation factor GTPase family. PrfC subfamily.

It localises to the cytoplasm. Functionally, increases the formation of ribosomal termination complexes and stimulates activities of RF-1 and RF-2. It binds guanine nucleotides and has strong preference for UGA stop codons. It may interact directly with the ribosome. The stimulation of RF-1 and RF-2 is significantly reduced by GTP and GDP, but not by GMP. This chain is Peptide chain release factor 3, found in Pseudomonas entomophila (strain L48).